The sequence spans 498 residues: Lysine--tRNA ligase (498 aa).

Mg(2+)-binding residues include Glu411 and Glu418.

This sequence belongs to the class-II aminoacyl-tRNA synthetase family. In terms of assembly, homodimer. Mg(2+) is required as a cofactor.

It is found in the cytoplasm. The enzyme catalyses tRNA(Lys) + L-lysine + ATP = L-lysyl-tRNA(Lys) + AMP + diphosphate. The sequence is that of Lysine--tRNA ligase from Enterococcus faecalis (strain ATCC 700802 / V583).